The chain runs to 291 residues: B-lymphocyte antigen CD20 (291 aa).

The Cytoplasmic segment spans residues 1 to 44 (MSGPFPAEPTKGPLAMQPAPKVNLKRTSSLVGPTQSFFMRESKA). A Phosphoserine modification is found at Ser-29. The chain crosses the membrane as a helical span at residues 45–65 (LGAVQIMNGLFHITLGGLLMI). Residues 66–68 (PTG) lie on the Extracellular side of the membrane. A helical membrane pass occupies residues 69-89 (VFAPICLSVWYPLWGGIMYII). The Cytoplasmic portion of the chain corresponds to 90–111 (SGSLLAAAAEKTSRKSLVKAKV). Residues 112 to 132 (IMSSLSLFAAISGIILSIMDI) form a helical membrane-spanning segment. The Extracellular segment spans residues 133–182 (LNMTLSHFLKMRRLELIQTSKPYVDIYDCEPSNSSEKNSPSTQYCNSIQS). Residues 183–203 (VFLGILSAMLISAFFQKLVTA) form a helical membrane-spanning segment. Residues 204–291 (GIVENEWKRM…SLPVENEIAP (88 aa)) are Cytoplasmic-facing. Cys-214 carries S-palmitoyl cysteine lipidation. Position 219 is a phosphoserine (Ser-219). Phosphothreonine is present on Thr-233. A compositionally biased stretch (acidic residues) spans 261–270 (VQEEEEEEAE). The segment at 261–291 (VQEEEEEEAEINFPAPPQEQESLPVENEIAP) is disordered.

This sequence belongs to the MS4A family. Forms homotetramers. Interacts with the heavy and light chains of cell surface IgM, the antigen-binding components of the BCR. Phosphorylated.

The protein localises to the cell membrane. In terms of biological role, B-lymphocyte-specific membrane protein that plays a role in the regulation of cellular calcium influx necessary for the development, differentiation, and activation of B-lymphocytes. Functions as a store-operated calcium (SOC) channel component promoting calcium influx after activation by the B-cell receptor/BCR. The polypeptide is B-lymphocyte antigen CD20 (Ms4a1) (Mus musculus (Mouse)).